Consider the following 867-residue polypeptide: MHHPKETLLIDSSNPSYSHLTEYRFDNLKREESRSTSLFGDRRRVMKILSGFSLIIIVVFIFATSHEQALSTTGDLTSSTQSTTHGGVVFTYPTTRKSPGKGCVLNSQRSTPKNLKQYTGNISDACLAGIKSSNCKTWLMTNAVILKYSDDVVSNCPSILEFVNKTSLSCSGKSQIQYMYPQSDSASSDCNHSYDFNSNALNRAIYNFNYSKTLISTSYANTPGFAMYTFLLKIMNCVNKNGIKLDAGILNIFTDMTYIDLCESDVFMSSFPDTLNKLIEAGYIVKFYFLNQNLQDTQKNVENVLAGCKYMNSRSYCEIVDWSYHSENPNEFEICIPDSQPSGKKEDFNWHVTELLLIIGIPCISLTICCIAFFVCCLKCAKLKMAMMRMNVFSNDTHQNPDEMELKKRWIGMRKKFNKDVENGSCKELNTQKWSHFASANNYMDIQALANANKKDIWEIDTKNLLVQEDHLLGNGAFANVYKGIVKGKIPLLVVNNSLNMTVESENNGHYEAAIKKLPAHADEQNHLDFFHEIDFMKRLGHHPHVISMLGCVSNPYEPLIVVEYCARGDLLKFLRRHKDYVLMNKTDDCPIEADMCLRIKDLVSIAWQVADGMSYLASKNFIHRDLAARNILLTKSLTAKVSDFGLCRYMDSALYTAKGGRLPIKWMSVEALKLYEFSTKTDVWSFGVLLFEIFSMGDVPYPTIQQVDMLEHLLAGGRLSQPLKCPNEIFNIMQKCWAEKPEDRPEFNEMRGEITVMLNLDDESYGYLSVESQGGPKYTQLTMQDSKETAPCSTPGGSQDMDEDGDYDSGSEGHSQGTCAQLDQVLTERFGEEQKKEIKQIFCEITSKSMRGKRRQSNSTVSTYQS.

Transmembrane regions (helical) follow at residues 45-65 (VMKI…FATS) and 355-375 (LLLI…AFFV). Residues N395 and N423 are each glycosylated (N-linked (GlcNAc...) asparagine). Residues 467-757 (VQEDHLLGNG…FNEMRGEITV (291 aa)) enclose the Protein kinase domain. 473-481 (LGNGAFANV) contributes to the ATP binding site. Residues N496 and N500 are each glycosylated (N-linked (GlcNAc...) asparagine). An ATP-binding site is contributed by K516. Residue N585 is glycosylated (N-linked (GlcNAc...) asparagine). Catalysis depends on D626, which acts as the Proton acceptor. Disordered regions lie at residues 782-821 (LTMQ…GTCA) and 848-867 (SKSM…TYQS). A compositionally biased stretch (acidic residues) spans 801–810 (DMDEDGDYDS). The segment covering 858–867 (SNSTVSTYQS) has biased composition (polar residues). An N-linked (GlcNAc...) asparagine glycan is attached at N859.

It belongs to the protein kinase superfamily. Tyr protein kinase family.

The protein localises to the membrane. It catalyses the reaction L-tyrosyl-[protein] + ATP = O-phospho-L-tyrosyl-[protein] + ADP + H(+). The chain is Putative tyrosine-protein kinase F09A5.2 from Caenorhabditis elegans.